Here is a 252-residue protein sequence, read N- to C-terminus: NAD-dependent protein deacetylase (252 aa).

The 248-residue stretch at 1-248 folds into the Deacetylase sirtuin-type domain; the sequence is MYLVEEAKKV…PEVISHIQSL (248 aa). Ala26, Thr30, Phe37, Arg38, Gln102, Val104, Asp105, and His120 together coordinate NAD(+). Phe37 lines the nicotinamide pocket. Nicotinamide-binding residues include Val104 and Asp105. His120 (proton acceptor) is an active-site residue. Cys128, Cys131, Cys153, and Cys155 together coordinate Zn(2+). NAD(+)-binding residues include Ser191, Ser192, Asn216, and Ile234.

The protein belongs to the sirtuin family. Class U subfamily. The cofactor is Zn(2+).

It localises to the cytoplasm. It carries out the reaction N(6)-acetyl-L-lysyl-[protein] + NAD(+) + H2O = 2''-O-acetyl-ADP-D-ribose + nicotinamide + L-lysyl-[protein]. NAD-dependent protein deacetylase which modulates the activities of several enzymes which are inactive in their acetylated form. Deacetylates the N-terminal lysine residue of Alba, the major archaeal chromatin protein and that, in turn, increases Alba's DNA binding affinity, thereby repressing transcription. This is NAD-dependent protein deacetylase from Sulfolobus acidocaldarius (strain ATCC 33909 / DSM 639 / JCM 8929 / NBRC 15157 / NCIMB 11770).